The chain runs to 266 residues: MERWRLLRDGELLTTHSSWILPVRQGDMPAMLKVARIPDEEAGYRLLTWWDGQGAARVFASAAGALLMERASGAGDLAQIAWSGQDDEACRILCDTAARLHAPRSGPPPDLHPLQEWFQPLFRLAAEHAALAPAASVARQLLAAPREVCPLHGDLHHENVLDFGDRGWLAIDPHGLLGERTFDYANIFTNPDLSDPGRPLAILPGRLEARLSIVVATTGFEPERLLRWIIAWTGLSAAWFIGDGDGEGEGAAIDLAVNAMARRLLD.

Asp154 serves as the catalytic Proton acceptor.

This sequence belongs to the aminoglycoside phosphotransferase family.

It catalyses the reaction streptomycin + ATP = streptomycin 3''-phosphate + ADP + H(+). In terms of biological role, the aminoglycoside phosphotransferases achieve inactivation of their antibiotic substrates by phosphorylation. This chain is Streptomycin 3''-kinase (str), found in Klebsiella pneumoniae.